A 76-amino-acid chain; its full sequence is DNA-directed RNA polymerase subunit omega (76 aa).

The protein belongs to the RNA polymerase subunit omega family. In terms of assembly, in cyanobacteria the RNAP catalytic core is composed of 2 alpha, 1 beta, 1 beta', 1 gamma and 1 omega subunit. When a sigma factor is associated with the core the holoenzyme is formed, which can initiate transcription.

The enzyme catalyses RNA(n) + a ribonucleoside 5'-triphosphate = RNA(n+1) + diphosphate. In terms of biological role, promotes RNA polymerase assembly. Latches the N- and C-terminal regions of the beta' subunit thereby facilitating its interaction with the beta and alpha subunits. This Synechocystis sp. (strain ATCC 27184 / PCC 6803 / Kazusa) protein is DNA-directed RNA polymerase subunit omega (rpoZ).